Here is a 110-residue protein sequence, read N- to C-terminus: Ribonuclease (110 aa).

Catalysis depends on Glu73, which acts as the Proton acceptor. His102 functions as the Proton donor in the catalytic mechanism.

Belongs to the ribonuclease N1/T1 family.

The protein resides in the secreted. Functionally, hydrolyzes phosphodiester bonds in RNA, poly- and oligoribonucleotides resulting in 3'-nucleoside monophosphates via 2',3'-cyclophosphate intermediates. This Niallia circulans (Bacillus circulans) protein is Ribonuclease.